The sequence spans 89 residues: Small ribosomal subunit protein uS15 (89 aa).

The protein belongs to the universal ribosomal protein uS15 family. In terms of assembly, part of the 30S ribosomal subunit. Forms a bridge to the 50S subunit in the 70S ribosome, contacting the 23S rRNA.

One of the primary rRNA binding proteins, it binds directly to 16S rRNA where it helps nucleate assembly of the platform of the 30S subunit by binding and bridging several RNA helices of the 16S rRNA. Its function is as follows. Forms an intersubunit bridge (bridge B4) with the 23S rRNA of the 50S subunit in the ribosome. The sequence is that of Small ribosomal subunit protein uS15 from Lactobacillus johnsonii (strain CNCM I-12250 / La1 / NCC 533).